Reading from the N-terminus, the 239-residue chain is 4-hydroxy-tetrahydrodipicolinate reductase (239 aa).

Residues 9-14, 78-80, and 104-107 each bind NAD(+); these read GINGKM, GTT, and APNF. His-134 serves as the catalytic Proton donor/acceptor. Residue His-135 coordinates (S)-2,3,4,5-tetrahydrodipicolinate. The active-site Proton donor is Lys-138. 144-145 lines the (S)-2,3,4,5-tetrahydrodipicolinate pocket; that stretch reads GT.

Belongs to the DapB family.

The protein resides in the cytoplasm. The catalysed reaction is (S)-2,3,4,5-tetrahydrodipicolinate + NAD(+) + H2O = (2S,4S)-4-hydroxy-2,3,4,5-tetrahydrodipicolinate + NADH + H(+). The enzyme catalyses (S)-2,3,4,5-tetrahydrodipicolinate + NADP(+) + H2O = (2S,4S)-4-hydroxy-2,3,4,5-tetrahydrodipicolinate + NADPH + H(+). Its pathway is amino-acid biosynthesis; L-lysine biosynthesis via DAP pathway; (S)-tetrahydrodipicolinate from L-aspartate: step 4/4. Functionally, catalyzes the conversion of 4-hydroxy-tetrahydrodipicolinate (HTPA) to tetrahydrodipicolinate. The protein is 4-hydroxy-tetrahydrodipicolinate reductase of Coxiella burnetii (strain Dugway 5J108-111).